A 128-amino-acid polypeptide reads, in one-letter code: Insulin-like growth factor 2 (128 aa).

The first 24 residues, Met-1–Ala-24, serve as a signal peptide directing secretion. Residues Ala-25–Phe-52 form a b region. 3 disulfides stabilise this stretch: Cys-33-Cys-71, Cys-45-Cys-84, and Cys-70-Cys-75. Residues Ser-53 to Arg-64 are c. The interval Gly-65–Ala-85 is a. Residues Thr-86–Glu-91 are d. Positions Arg-92 to Arg-128 are cleaved as a propeptide — e peptide.

This sequence belongs to the insulin family. As to quaternary structure, interacts with MYORG; this interaction is required for IGF2 secretion. Interacts with integrins ITGAV:ITGB3 and ITGA6:ITGB4; integrin-binding is required for IGF2 signaling. Post-translationally, proteolytically processed by PCSK4, proIGF2 is cleaved at Arg-128 and Arg-92 to generate big-IGF2 and mature IGF2.

The protein resides in the secreted. In terms of biological role, the insulin-like growth factors possess growth-promoting activity. Major fetal growth hormone in mammals. Plays a key role in regulating fetoplacental development. IGF2 is influenced by placental lactogen. Also involved in tissue differentiation. In adults, involved in glucose metabolism in adipose tissue, skeletal muscle and liver. Acts as a ligand for integrin which is required for IGF2 signaling. Positively regulates myogenic transcription factor MYOD1 function by facilitating the recruitment of transcriptional coactivators, thereby controlling muscle terminal differentiation. Inhibits myoblast differentiation and metabolism via increasing the mitochondrial respiration rate. Its function is as follows. Preptin undergoes glucose-mediated co-secretion with insulin, and acts as a physiological amplifier of glucose-mediated insulin secretion. Exhibits osteogenic properties by increasing osteoblast mitogenic activity through phosphoactivation of MAPK1 and MAPK3. This chain is Insulin-like growth factor 2, found in Cavia porcellus (Guinea pig).